The sequence spans 227 residues: Thiamine-phosphate synthase (227 aa).

4-amino-2-methyl-5-(diphosphooxymethyl)pyrimidine is bound by residues 50–54 and aspartate 82; that span reads QFRQK. Positions 83 and 102 each coordinate Mg(2+). 4-amino-2-methyl-5-(diphosphooxymethyl)pyrimidine is bound at residue threonine 121. 147-149 serves as a coordination point for 2-[(2R,5Z)-2-carboxy-4-methylthiazol-5(2H)-ylidene]ethyl phosphate; it reads TTS. Lysine 150 contributes to the 4-amino-2-methyl-5-(diphosphooxymethyl)pyrimidine binding site. Residues glycine 178 and 198-199 each bind 2-[(2R,5Z)-2-carboxy-4-methylthiazol-5(2H)-ylidene]ethyl phosphate; that span reads LS.

It belongs to the thiamine-phosphate synthase family. The cofactor is Mg(2+).

The catalysed reaction is 2-[(2R,5Z)-2-carboxy-4-methylthiazol-5(2H)-ylidene]ethyl phosphate + 4-amino-2-methyl-5-(diphosphooxymethyl)pyrimidine + 2 H(+) = thiamine phosphate + CO2 + diphosphate. It catalyses the reaction 2-(2-carboxy-4-methylthiazol-5-yl)ethyl phosphate + 4-amino-2-methyl-5-(diphosphooxymethyl)pyrimidine + 2 H(+) = thiamine phosphate + CO2 + diphosphate. The enzyme catalyses 4-methyl-5-(2-phosphooxyethyl)-thiazole + 4-amino-2-methyl-5-(diphosphooxymethyl)pyrimidine + H(+) = thiamine phosphate + diphosphate. It participates in cofactor biosynthesis; thiamine diphosphate biosynthesis; thiamine phosphate from 4-amino-2-methyl-5-diphosphomethylpyrimidine and 4-methyl-5-(2-phosphoethyl)-thiazole: step 1/1. Functionally, condenses 4-methyl-5-(beta-hydroxyethyl)thiazole monophosphate (THZ-P) and 2-methyl-4-amino-5-hydroxymethyl pyrimidine pyrophosphate (HMP-PP) to form thiamine monophosphate (TMP). The chain is Thiamine-phosphate synthase from Salinibacter ruber (strain DSM 13855 / M31).